The chain runs to 384 residues: Glucans biosynthesis protein C (384 aa).

Transmembrane regions (helical) follow at residues 17 to 37, 54 to 74, 91 to 111, 140 to 160, 173 to 193, 212 to 232, 240 to 260, 274 to 294, 311 to 331, and 338 to 358; these read AWLM…THSW, FIHA…SYML, VGIP…ILLQ, LWFL…FTWF, AISL…YAAI, FIVM…LAFI, FTTP…AYLL, TESV…FSLG, ASLF…AYIT, and LIGF…LYEI.

This sequence belongs to the acyltransferase 3 family. OpgC subfamily.

It is found in the cell membrane. It participates in glycan metabolism; osmoregulated periplasmic glucan (OPG) biosynthesis. Its function is as follows. Necessary for the succinyl substitution of periplasmic glucans. Could catalyze the transfer of succinyl residues from the cytoplasmic side of the membrane to the nascent glucan backbones on the periplasmic side of the membrane. The polypeptide is Glucans biosynthesis protein C (Salmonella typhimurium (strain LT2 / SGSC1412 / ATCC 700720)).